We begin with the raw amino-acid sequence, 775 residues long: K(+)-insensitive pyrophosphate-energized proton pump (775 aa).

5 helical membrane passes run serine 9–isoleucine 29, isoleucine 65–proline 85, alanine 108–valine 128, methionine 160–alanine 180, and leucine 185–isoleucine 205. Position 208 (lysine 208) interacts with substrate. Residues aspartate 211, aspartate 215, and aspartate 241 each coordinate Mg(2+). The next 6 membrane-spanning stretches (helical) occupy residues valine 259–isoleucine 279, phenylalanine 288–leucine 308, phenylalanine 327–valine 347, phenylalanine 359–phenylalanine 379, serine 413–glycine 433, and alanine 442–isoleucine 462. Aspartate 472 is a binding site for Mg(2+). 4 helical membrane passes run isoleucine 508–valine 528, proline 555–isoleucine 575, leucine 622–valine 642, and alanine 644–alanine 664. The Ca(2+) site is built by aspartate 671, aspartate 697, and aspartate 701. Lysine 704 serves as a coordination point for substrate. Transmembrane regions (helical) follow at residues alanine 710–valine 730 and glycine 735–tryptophan 755.

It belongs to the H(+)-translocating pyrophosphatase (TC 3.A.10) family. K(+)-insensitive subfamily. Homodimer. Mg(2+) serves as cofactor.

The protein localises to the cell membrane. The enzyme catalyses diphosphate + H2O + H(+)(in) = 2 phosphate + 2 H(+)(out). Its function is as follows. Proton pump that utilizes the energy of pyrophosphate hydrolysis as the driving force for proton movement across the membrane. Generates a proton motive force. The sequence is that of K(+)-insensitive pyrophosphate-energized proton pump from Chloroflexus aurantiacus (strain ATCC 29366 / DSM 635 / J-10-fl).